Consider the following 271-residue polypeptide: uncharacterized protein (271 aa).

3 helical membrane-spanning segments follow: residues 30–50 (IWFP…GMLL), 189–209 (ALAA…YFLI), and 218–238 (FLVT…IFAC).

It is found in the cell membrane. This is an uncharacterized protein from Aquifex aeolicus (strain VF5).